The chain runs to 485 residues: Aspartyl/glutamyl-tRNA(Asn/Gln) amidotransferase subunit B (485 aa).

It belongs to the GatB/GatE family. GatB subfamily. Heterotrimer of A, B and C subunits.

The enzyme catalyses L-glutamyl-tRNA(Gln) + L-glutamine + ATP + H2O = L-glutaminyl-tRNA(Gln) + L-glutamate + ADP + phosphate + H(+). It carries out the reaction L-aspartyl-tRNA(Asn) + L-glutamine + ATP + H2O = L-asparaginyl-tRNA(Asn) + L-glutamate + ADP + phosphate + 2 H(+). In terms of biological role, allows the formation of correctly charged Asn-tRNA(Asn) or Gln-tRNA(Gln) through the transamidation of misacylated Asp-tRNA(Asn) or Glu-tRNA(Gln) in organisms which lack either or both of asparaginyl-tRNA or glutaminyl-tRNA synthetases. The reaction takes place in the presence of glutamine and ATP through an activated phospho-Asp-tRNA(Asn) or phospho-Glu-tRNA(Gln). This is Aspartyl/glutamyl-tRNA(Asn/Gln) amidotransferase subunit B from Anaplasma marginale (strain Florida).